The chain runs to 255 residues: Putative cysteine-rich repeat secretory protein 10 (255 aa).

An N-terminal signal peptide occupies residues 1–26 (MFSSSVSISILVVVAMQFSFIHNVLS). Gnk2-homologous domains are found at residues 33 to 134 (YLQH…EIYT) and 140 to 252 (FKHY…LYPF).

The protein belongs to the cysteine-rich repeat secretory protein family.

It localises to the secreted. The chain is Putative cysteine-rich repeat secretory protein 10 (CRRSP10) from Arabidopsis thaliana (Mouse-ear cress).